The following is a 77-amino-acid chain: Major outer membrane lipoprotein Lpp (77 aa).

Positions 1-19 (MNRTKLVLGAVILGSHSAG) are cleaved as a signal peptide. A lipid anchor (N-palmitoyl cysteine) is attached at Cys20. A lipid anchor (S-diacylglycerol cysteine) is attached at Cys20. Repeats lie at residues 23-33 (NAKIDQLSSDV) and 37-47 (NAKVDQLSNDV). A coiled-coil region spans residues 26 to 74 (IDQLSSDVQTLNAKVDQLSNDVNAMRSDVQAAKDDAARANQRLDNQAHA). A disordered region spans residues 56–77 (AAKDDAARANQRLDNQAHAYKK). Lys77 is subject to N6-murein peptidoglycan lysine.

The protein belongs to the Lpp family. In terms of assembly, homotrimer.

Its subcellular location is the cell outer membrane. The protein localises to the secreted. It localises to the cell wall. Its function is as follows. A highly abundant outer membrane lipoprotein that controls the distance between the inner and outer membranes. The only protein known to be covalently linked to the peptidoglycan network (PGN). Also non-covalently binds the PGN. The link between the cell outer membrane and PGN contributes to maintenance of the structural and functional integrity of the cell envelope, and maintains the correct distance between the PGN and the outer membrane. The polypeptide is Major outer membrane lipoprotein Lpp (Serratia marcescens).